The chain runs to 528 residues: Nucleoporin ASM4 (528 aa).

One copy of the FG 1 repeat lies at 2 to 3 (FG). The segment covering 23 to 50 (TTQMFQSQSQLQPQPQPQPQQQQQHLQF) has biased composition (low complexity). Disordered regions lie at residues 23 to 64 (TTQM…FGNS) and 88 to 144 (IKNG…SMNA). 2 stretches are compositionally biased toward polar residues: residues 51 to 64 (NGSSDASSLRFGNS) and 97 to 108 (QHGQGNNPSWVN). Residues 61 to 62 (FG) form an FG 2 repeat. Basic residues predominate over residues 110–125 (PKKRFTPHTVIRRKTT). Positions 127–141 (QNSSSDINQNDDSSS) are enriched in low complexity. FG repeat units lie at residues 195 to 196 (FG), 274 to 275 (FG), and 291 to 292 (FG). In terms of domain architecture, RRM Nup35-type spans 265–394 (SSSLSAIIVF…IPYSKNAVEQ (130 aa)). A phosphoserine mark is found at S458 and S464. A coiled-coil region spans residues 490–510 (NLLRNLESKMRQQEAKYRNNE). The stretch at 523–524 (FG) is one FG 6 repeat.

Component of the nuclear pore complex (NPC). NPC constitutes the exclusive means of nucleocytoplasmic transport. NPCs allow the passive diffusion of ions and small molecules and the active, nuclear transport receptor-mediated bidirectional transport of macromolecules such as proteins, RNAs, ribonucleoparticles (RNPs), and ribosomal subunits across the nuclear envelope. Due to its 8-fold rotational symmetry, all subunits are present with 8 copies or multiples thereof. ASM4 may form a subcomplex with NUP53, NDC1, and NUP170. Phosphorylated by CDC28.

The protein resides in the nucleus. It is found in the nuclear pore complex. It localises to the nucleus membrane. Functions as a component of the nuclear pore complex (NPC). NPC components, collectively referred to as nucleoporins (NUPs), can play the role of both NPC structural components and of docking or interaction partners for transiently associated nuclear transport factors. Active directional transport is assured by both, a Phe-Gly (FG) repeat affinity gradient for these transport factors across the NPC and a transport cofactor concentration gradient across the nuclear envelope (GSP1 and GSP2 GTPases associated predominantly with GTP in the nucleus, with GDP in the cytoplasm). May have a mitosis control function. This is Nucleoporin ASM4 (ASM4) from Saccharomyces cerevisiae (strain ATCC 204508 / S288c) (Baker's yeast).